We begin with the raw amino-acid sequence, 702 residues long: MNSLFASTARGLEELLKTELENLGAVECQVVQGGVHFKGDTRLVYQSLMWSRLASRIMLPLGECKVYSDLDLYLGVQAINWTEMFNPGATFAVHFSGLNDTIRNSQYGAMKVKDAIVDAFTRKNLPRPNVDRDAPDIRVNVWLHKETASIALDLSGDGLHLRGYRDRAGIAPIKETLAAAIVMRSGWQPGTPLLDPMCGSGTLLIEAAMLATDRAPGLHRGRWGFSGWAQHDEAIWQEVKAEAQTRARKGLAEYSSHFYGSDSDARVIQRARTNARLAGIGELITFEVKDVAQLTNPLPKGPYGTVLSNPPYGERLDSEPALIALHSLLGRIMKNQFGGWNLSLFSASPDLLSCLQLRADKQYKAKNGPLDCVQKNYHVAESTPDSKPAMVAEDYANRLRKNLKKFEKWARQEGIECYRLYDADLPEYNVAVDRYSDWVVVQEYAPPKTIDAHKARQRLFDIIAATISVLGIAPNKLVLKTRERQKGKNQYQKLGEKGEFLEVTEYNAHLWVNLTDYLDTGLFLDHRIARRMLGQMSKGKDFLNLFSYTGSATVHAGLGGALSTTTVDMSRTYLEWAERNLRLNGLTGRAHRLIQADCLAWLREANEQFDLIFIDPPTFSNSKRMEDAFDVQRDHLALMKDLKRLLRAGGTIMFSNNKRGFRMDLDGLAKLGLKAQEITQKTLSQDFARNRQIHNCWLITAA.

Positions 43–154 (LVYQSLMWSR…KETASIALDL (112 aa)) constitute a THUMP domain.

The protein belongs to the methyltransferase superfamily. RlmKL family.

The protein resides in the cytoplasm. The enzyme catalyses guanosine(2445) in 23S rRNA + S-adenosyl-L-methionine = N(2)-methylguanosine(2445) in 23S rRNA + S-adenosyl-L-homocysteine + H(+). It carries out the reaction guanosine(2069) in 23S rRNA + S-adenosyl-L-methionine = N(2)-methylguanosine(2069) in 23S rRNA + S-adenosyl-L-homocysteine + H(+). In terms of biological role, specifically methylates the guanine in position 2445 (m2G2445) and the guanine in position 2069 (m7G2069) of 23S rRNA. This is Ribosomal RNA large subunit methyltransferase K/L from Shigella boydii serotype 4 (strain Sb227).